A 124-amino-acid chain; its full sequence is Snaclec rhodocetin subunit delta (124 aa).

3 cysteine pairs are disulfide-bonded: C1/C12, C29/C120, and C95/C112. Residues 8-121 (YNGYCYRVFS…CEKTVSFVCK (114 aa)) enclose the C-type lectin domain.

Belongs to the snaclec family. In terms of assembly, heterotetramer of subunit alpha, beta, gamma and delta; only the gamma and the delta subunits are disulfide-linked. Alpha-beta heterodimer and gamma-delta heterodimer associate orthogonally, giving a cruciform conformation. This heterotetramer may covalently dimerizes thanks to the gamma subunit. Expressed by the venom gland.

Its subcellular location is the secreted. Functionally, potent inhibitor of collagen-induced platelet aggregation. It acts by binding to the integrin alpha2A domain and blocks collagen binding to integrin alpha-2/beta-1 (ITGA2/ITGB1). The gamma/delta subunits mainly contribute to this activity. The protein is Snaclec rhodocetin subunit delta of Calloselasma rhodostoma (Malayan pit viper).